The primary structure comprises 420 residues: Ammonia monooxygenase beta subunit (420 aa).

A signal peptide spans 1–25 (MGIKNLYKRGVMGLYGVAYAVAALA). Cu cation-binding residues include His38, His142, and His144. The next 2 membrane-spanning stretches (helical) occupy residues 193–213 (GIFW…VFTA) and 240–260 (ITWV…RYTE).

As to quaternary structure, the soluble ammonia monooxygenase is a nonamer composed of three alpha subunits (AmoA), three beta subunits (AmoB) and three gamma subunits (Cytochrome c1 PetC). It depends on Cu(2+) as a cofactor.

The protein resides in the cell membrane. Its subcellular location is the cytoplasm. It catalyses the reaction AH2 + NH4(+) + O2 = hydroxylamine + A + H2O + H(+). In vitro, inhibited by acetylene. Its function is as follows. Part of the ammonia monooxygenase complex, which catalyzes the oxidation of ammonia to hydroxylamine, the first reaction in the process of ammonia oxidation to nitrite. The chain is Ammonia monooxygenase beta subunit from Nitrosomonas europaea (strain ATCC 19718 / CIP 103999 / KCTC 2705 / NBRC 14298).